The primary structure comprises 1079 residues: Psi-producing oxygenase A (1079 aa).

The segment at 105–446 (TNTFLTTLWN…DGSYDDNDLV (342 aa)) is linoleate 8R-lipoxygenase. Heme b is bound at residue histidine 202. Tyrosine 374 is an active-site residue. Histidine 377 contributes to the heme b binding site. The segment at 654–1079 (QFINSHSACM…WDGDLPEVKE (426 aa)) is 9,12-octadecadienoate 8-hydroperoxide 8R-isomerase.

The protein belongs to the peroxidase family. Homotetramer. Heme b is required as a cofactor.

It carries out the reaction (9Z,12Z)-octadecadienoate + O2 = (8R,9Z,12Z)-8-hydroperoxyoctadeca-9,12-dienoate. The catalysed reaction is (8R,9Z,12Z)-8-hydroperoxyoctadeca-9,12-dienoate = (5S,8R,9Z,12Z)-5,8-dihydroxyoctadeca-9,12-dienoate. Its function is as follows. Bifunctional heme-containing enzyme that oxidizes linoleic acid to (8R,9Z,12Z)-8-hydroperoxyoctadeca-9,12-dienoate (within the N-terminal heme peroxidase domain), which is subsequently isomerized to (5S,8R,9Z,12Z)-5,8-dihydroxyoctadeca-9,12-dienoate (within the C-terminal P450 heme thiolate domain). Oxidized unsaturated fatty acids, so-called oxylipins, derived from endogenous fatty acids, influence the development of the asexual conidiophores and sexual cleistothecia and regulate the secondary metabolism. These substances were collectively named psi factors and are primarily a mixture of hydroxylated oleic, linoleic and alpha-linolenic acids. They are termed psi-beta, psi-alpha, and psi-gamma, respectively. Oxylipins may also serve as activators of mammalian immune responses contributing to enhanced resistance to opportunistic fungi and as factors that modulate fungal development contributing to resistance to host defenses. In Aspergillus fumigatus (strain CBS 144.89 / FGSC A1163 / CEA10) (Neosartorya fumigata), this protein is Psi-producing oxygenase A (ppoA).